The primary structure comprises 124 residues: Orexigenic neuropeptide QRFP (124 aa).

The signal sequence occupies residues 1 to 17; it reads MRCLCSWLCLLLPLSAC. Residues 18-79 constitute a propeptide that is removed on maturation; the sequence is FPLLDRRGPT…REHTGFRLGR (62 aa). Positions 63-100 are disordered; it reads KEQQASRREHTGFRLGRQDSGSEATGFLPTDSEKASGP. Pyrrolidone carboxylic acid is present on glutamine 80. Residue phenylalanine 122 is modified to Phenylalanine amide.

It belongs to the RFamide neuropeptide family. Ligand for the G-protein coupled receptor QRFPR/GPR103. As to expression, expressed in the brain with highest expression levels in the hypothalamus and optic nerve. Also expressed in the trachea and mammary gland.

Its subcellular location is the secreted. Stimulates feeding and grooming behavior, metabolic rate and locomotor activity and increases blood pressure. May have orexigenic activity. May promote aldosterone secretion by the adrenal gland. In Rattus norvegicus (Rat), this protein is Orexigenic neuropeptide QRFP (Qrfp).